Consider the following 239-residue polypeptide: Phosphoribosylaminoimidazole-succinocarboxamide synthase (239 aa).

The protein belongs to the SAICAR synthetase family.

It catalyses the reaction 5-amino-1-(5-phospho-D-ribosyl)imidazole-4-carboxylate + L-aspartate + ATP = (2S)-2-[5-amino-1-(5-phospho-beta-D-ribosyl)imidazole-4-carboxamido]succinate + ADP + phosphate + 2 H(+). It functions in the pathway purine metabolism; IMP biosynthesis via de novo pathway; 5-amino-1-(5-phospho-D-ribosyl)imidazole-4-carboxamide from 5-amino-1-(5-phospho-D-ribosyl)imidazole-4-carboxylate: step 1/2. The protein is Phosphoribosylaminoimidazole-succinocarboxamide synthase of Acinetobacter baumannii (strain AB307-0294).